We begin with the raw amino-acid sequence, 407 residues long: [Pyruvate dehydrogenase (acetyl-transferring)] kinase isozyme 2, mitochondrial (407 aa).

One can recognise a Histidine kinase domain in the interval 135 to 364 (LEYKDTYGDD…DAVIYLKALS (230 aa)). Residues Y215 and Y216 each carry the phosphotyrosine modification. Residues 251–258 (ELFKNAMR), D290, 309–310 (ST), and 325–330 (GFGYGL) contribute to the ATP site. Residue K376 is modified to N6-succinyllysine.

This sequence belongs to the PDK/BCKDK protein kinase family. Homodimer, and heterodimer with PDK1. Interacts with the pyruvate dehydrogenase complex subunit DLAT, and is part of the multimeric pyruvate dehydrogenase complex that contains multiple copies of pyruvate dehydrogenase (E1), dihydrolipoamide acetyltransferase (DLAT, E2) and lipoamide dehydrogenase (DLD, E3). As to expression, detected in heart (at protein level). Highest level of expression in heart and skeletal muscle and the lowest in spleen and lung. Liver, kidney, brain and testis levels are intermediate.

It localises to the mitochondrion matrix. It carries out the reaction L-seryl-[pyruvate dehydrogenase E1 alpha subunit] + ATP = O-phospho-L-seryl-[pyruvate dehydrogenase E1 alpha subunit] + ADP + H(+). Activity increases in response to increased acetyl-CoA and NADH levels and upon binding to the pyruvate dehydrogenase subunit DLAT. Inhibited by ADP and pyruvate; these compounds interfere with DLAT binding and thereby inhibit kinase activity. Inhibited by dichloroacetate. Inhibited by AZD7545; this compound interferes with DLAT binding and thereby inhibits kinase activity. Reactive oxygen species cause the formation of disulfide bonds, and thereby inhibit the enzyme. Its function is as follows. Kinase that plays a key role in the regulation of glucose and fatty acid metabolism and homeostasis via phosphorylation of the pyruvate dehydrogenase subunits PDHA1 and PDHA2. This inhibits pyruvate dehydrogenase activity, and thereby regulates metabolite flux through the tricarboxylic acid cycle, down-regulates aerobic respiration and inhibits the formation of acetyl-coenzyme A from pyruvate. Inhibition of pyruvate dehydrogenase decreases glucose utilization and increases fat metabolism. Mediates cellular responses to insulin. Plays an important role in maintaining normal blood glucose levels and in metabolic adaptation to nutrient availability. Via its regulation of pyruvate dehydrogenase activity, plays an important role in maintaining normal blood pH and in preventing the accumulation of ketone bodies under starvation. Plays a role in the regulation of cell proliferation and in resistance to apoptosis under oxidative stress. Plays a role in p53/TP53-mediated apoptosis. This Rattus norvegicus (Rat) protein is [Pyruvate dehydrogenase (acetyl-transferring)] kinase isozyme 2, mitochondrial (Pdk2).